Consider the following 166-residue polypeptide: MNIENAYDQLNAWINTSNGSYIDIGGERYSFSRLKTITKDELSNFESDNNLKLPNDYKSFLINVGCVNIFVGEKTAGIEIIPPTDIRNFSKSVFYNFGDDLYPRLLLTTSIPKLGYFGGFWMESESKENYGIFYPDIPPELWIEECDFIKFDDWLIKLVKYKSRKI.

Functionally, immunity component of a toxin-immunity protein module, which functions as a cellular contact-dependent growth inhibition (CDI) system. Specifically inhibits its cognate toxin RhsB. Cell contact is necessary for growth inhibition. In Dickeya dadantii (strain 3937) (Erwinia chrysanthemi (strain 3937)), this protein is Immunity protein RhsIB (rhsIB).